Here is a 327-residue protein sequence, read N- to C-terminus: Thiamine-binding periplasmic protein (327 aa).

The first 18 residues, 1–18, serve as a signal peptide directing secretion; the sequence is MLKKCLPLLLLCTAPVFA. Residues 59-60, 161-162, Trp197, and 215-218 each bind thiamine; these read DG, ST, and YTTS.

It belongs to the bacterial solute-binding protein 1 family. In terms of assembly, monomer in solution. The complex is composed of two ATP-binding proteins (ThiQ), two transmembrane proteins (ThiP) and a solute-binding protein (ThiB).

The protein localises to the periplasm. With respect to regulation, transport is inhibited by the sulfhydryl-specific modifier N-ethylmaleimide. Functionally, part of the ABC transporter complex ThiBPQ involved in thiamine import. Binds thiamine, thiamine phosphate and thiamine diphosphate with high affinity. The chain is Thiamine-binding periplasmic protein (thiB) from Escherichia coli (strain K12).